Consider the following 197-residue polypeptide: dCTP deaminase, dUMP-forming (197 aa).

Residues 105–110 (RSSIGR), D123, 131–133 (TLE), Q152, Y166, K174, and Q178 contribute to the dCTP site. E133 acts as the Proton donor/acceptor in catalysis. Positions 161–183 (PAERPYGHPSRDSKYIGQTRPQT) are disordered. A compositionally biased stretch (basic and acidic residues) spans 165–174 (PYGHPSRDSK).

The protein belongs to the dCTP deaminase family. In terms of assembly, homotrimer.

It catalyses the reaction dCTP + 2 H2O = dUMP + NH4(+) + diphosphate. The protein operates within pyrimidine metabolism; dUMP biosynthesis; dUMP from dCTP: step 1/1. Functionally, bifunctional enzyme that catalyzes both the deamination of dCTP to dUTP and the hydrolysis of dUTP to dUMP without releasing the toxic dUTP intermediate. This is dCTP deaminase, dUMP-forming from Methanothermobacter thermautotrophicus (strain ATCC 29096 / DSM 1053 / JCM 10044 / NBRC 100330 / Delta H) (Methanobacterium thermoautotrophicum).